A 288-amino-acid chain; its full sequence is Sulfur carrier protein FdhD (288 aa).

The active-site Cysteine persulfide intermediate is Cys-122. 268–273 (FVRGER) provides a ligand contact to Mo-bis(molybdopterin guanine dinucleotide).

Belongs to the FdhD family.

It localises to the cytoplasm. In terms of biological role, required for formate dehydrogenase (FDH) activity. Acts as a sulfur carrier protein that transfers sulfur from IscS to the molybdenum cofactor prior to its insertion into FDH. This Anaeromyxobacter dehalogenans (strain 2CP-1 / ATCC BAA-258) protein is Sulfur carrier protein FdhD.